A 513-amino-acid polypeptide reads, in one-letter code: ATP synthase subunit alpha (513 aa).

169 to 176 (GDRQTGKT) serves as a coordination point for ATP.

This sequence belongs to the ATPase alpha/beta chains family. F-type ATPases have 2 components, CF(1) - the catalytic core - and CF(0) - the membrane proton channel. CF(1) has five subunits: alpha(3), beta(3), gamma(1), delta(1), epsilon(1). CF(0) has three main subunits: a(1), b(2) and c(9-12). The alpha and beta chains form an alternating ring which encloses part of the gamma chain. CF(1) is attached to CF(0) by a central stalk formed by the gamma and epsilon chains, while a peripheral stalk is formed by the delta and b chains.

It is found in the cell inner membrane. It carries out the reaction ATP + H2O + 4 H(+)(in) = ADP + phosphate + 5 H(+)(out). In terms of biological role, produces ATP from ADP in the presence of a proton gradient across the membrane. The alpha chain is a regulatory subunit. The sequence is that of ATP synthase subunit alpha from Salmonella arizonae (strain ATCC BAA-731 / CDC346-86 / RSK2980).